The sequence spans 111 residues: Phosphoribosyl-ATP pyrophosphatase (111 aa).

The protein belongs to the PRA-PH family.

Its subcellular location is the cytoplasm. It catalyses the reaction 1-(5-phospho-beta-D-ribosyl)-ATP + H2O = 1-(5-phospho-beta-D-ribosyl)-5'-AMP + diphosphate + H(+). It participates in amino-acid biosynthesis; L-histidine biosynthesis; L-histidine from 5-phospho-alpha-D-ribose 1-diphosphate: step 2/9. This Alcanivorax borkumensis (strain ATCC 700651 / DSM 11573 / NCIMB 13689 / SK2) protein is Phosphoribosyl-ATP pyrophosphatase.